A 21-amino-acid polypeptide reads, in one-letter code: Phospholipase A2 crotoxin basic chain (21 aa).

It belongs to the phospholipase A2 family. Group II subfamily. The cofactor is Ca(2+). Expressed by the venom gland.

The protein localises to the secreted. It carries out the reaction a 1,2-diacyl-sn-glycero-3-phosphocholine + H2O = a 1-acyl-sn-glycero-3-phosphocholine + a fatty acid + H(+). Its function is as follows. Snake venom phospholipase A2 (PLA2) that induces a conspicuous local myotoxic effect and moderate footpad edema. In vitro, it shows anticoagulant effects and is not cytotoxic on myoblast but is able to lyse myotubes. PLA2 catalyzes the calcium-dependent hydrolysis of the 2-acyl groups in 3-sn-phosphoglycerides. The protein is Phospholipase A2 crotoxin basic chain of Crotalus durissus cumanensis (South American rattlesnake).